The chain runs to 521 residues: 2-isopropylmalate synthase (521 aa).

The region spanning 5–267 (VIIFDTTLRD…HTNIKHQEIH (263 aa)) is the Pyruvate carboxyltransferase domain. Residues Asp-14, His-202, His-204, and Asn-238 each coordinate Mn(2+). Positions 392 to 521 (KLNYLSVQSG…FAQKTVMETL (130 aa)) are regulatory domain.

This sequence belongs to the alpha-IPM synthase/homocitrate synthase family. LeuA type 1 subfamily. Homodimer. It depends on Mn(2+) as a cofactor.

The protein localises to the cytoplasm. The catalysed reaction is 3-methyl-2-oxobutanoate + acetyl-CoA + H2O = (2S)-2-isopropylmalate + CoA + H(+). The protein operates within amino-acid biosynthesis; L-leucine biosynthesis; L-leucine from 3-methyl-2-oxobutanoate: step 1/4. Functionally, catalyzes the condensation of the acetyl group of acetyl-CoA with 3-methyl-2-oxobutanoate (2-ketoisovalerate) to form 3-carboxy-3-hydroxy-4-methylpentanoate (2-isopropylmalate). In Tolumonas auensis (strain DSM 9187 / NBRC 110442 / TA 4), this protein is 2-isopropylmalate synthase.